The sequence spans 253 residues: Imidazole glycerol phosphate synthase subunit HisF (253 aa).

Residues Asp11 and Asp130 contribute to the active site.

It belongs to the HisA/HisF family. As to quaternary structure, heterodimer of HisH and HisF.

The protein localises to the cytoplasm. It carries out the reaction 5-[(5-phospho-1-deoxy-D-ribulos-1-ylimino)methylamino]-1-(5-phospho-beta-D-ribosyl)imidazole-4-carboxamide + L-glutamine = D-erythro-1-(imidazol-4-yl)glycerol 3-phosphate + 5-amino-1-(5-phospho-beta-D-ribosyl)imidazole-4-carboxamide + L-glutamate + H(+). Its pathway is amino-acid biosynthesis; L-histidine biosynthesis; L-histidine from 5-phospho-alpha-D-ribose 1-diphosphate: step 5/9. Its function is as follows. IGPS catalyzes the conversion of PRFAR and glutamine to IGP, AICAR and glutamate. The HisF subunit catalyzes the cyclization activity that produces IGP and AICAR from PRFAR using the ammonia provided by the HisH subunit. The polypeptide is Imidazole glycerol phosphate synthase subunit HisF (Clostridium botulinum (strain Alaska E43 / Type E3)).